Reading from the N-terminus, the 314-residue chain is Ribosomal RNA small subunit methyltransferase H (314 aa).

Residues 58–60 (GGH), Asp76, Phe103, Asp119, and Gln126 contribute to the S-adenosyl-L-methionine site.

It belongs to the methyltransferase superfamily. RsmH family.

It is found in the cytoplasm. The catalysed reaction is cytidine(1402) in 16S rRNA + S-adenosyl-L-methionine = N(4)-methylcytidine(1402) in 16S rRNA + S-adenosyl-L-homocysteine + H(+). In terms of biological role, specifically methylates the N4 position of cytidine in position 1402 (C1402) of 16S rRNA. This is Ribosomal RNA small subunit methyltransferase H from Gloeobacter violaceus (strain ATCC 29082 / PCC 7421).